A 100-amino-acid polypeptide reads, in one-letter code: Small ribosomal subunit protein uS14 (100 aa).

The protein belongs to the universal ribosomal protein uS14 family. Part of the 30S ribosomal subunit. Contacts proteins S3 and S10.

In terms of biological role, binds 16S rRNA, required for the assembly of 30S particles and may also be responsible for determining the conformation of the 16S rRNA at the A site. This chain is Small ribosomal subunit protein uS14, found in Parasynechococcus marenigrum (strain WH8102).